Consider the following 439-residue polypeptide: Tol-Pal system protein TolB (439 aa).

A signal peptide spans 1–22; that stretch reads MTKFPRWLAMLVGLLFPLSALT.

The protein belongs to the TolB family. In terms of assembly, the Tol-Pal system is composed of five core proteins: the inner membrane proteins TolA, TolQ and TolR, the periplasmic protein TolB and the outer membrane protein Pal. They form a network linking the inner and outer membranes and the peptidoglycan layer.

The protein localises to the periplasm. In terms of biological role, part of the Tol-Pal system, which plays a role in outer membrane invagination during cell division and is important for maintaining outer membrane integrity. The chain is Tol-Pal system protein TolB from Xylella fastidiosa (strain 9a5c).